A 719-amino-acid chain; its full sequence is La-related protein 4 (719 aa).

N-acetylmethionine is present on Met1. The interaction with PABPC1 stretch occupies residues 12 to 21 (TGLNPNAKVW). The segment at 21-55 (WQEIPSGNPDGTPVTEPSWHETAATSGSHPEGHTE) is disordered. The tract at residues 107-299 (SSAISTEDLK…PIQTPTQYPS (193 aa)) is interaction with the poly-A tract of mRNA. Positions 109-198 (AISTEDLKEC…RPSHKRCIVI (90 aa)) constitute an HTH La-type RNA-binding domain. One can recognise an RRM domain in the interval 199–277 (LREIPETTPV…KAINTFFAKN (79 aa)). Arg363 is subject to Omega-N-methylarginine. Disordered stretches follow at residues 363-398 (RPFP…LSRS) and 437-470 (GRGR…APTP). Residues 376-389 (SSSGSEHSTEGSVS) show a composition bias toward low complexity. Ser387 and Ser396 each carry phosphoserine. A compositionally biased stretch (basic residues) spans 439 to 448 (GRRTLFRGRR). The segment covering 460–470 (PAATEAKAPTP) has biased composition (low complexity). Ser500 carries the post-translational modification Phosphoserine. Composition is skewed to polar residues over residues 529–538 (DCTSAPLSIS) and 578–599 (SSPT…SNIN). Disordered regions lie at residues 529-562 (DCTS…QMED), 576-601 (PVSS…INPP), and 615-719 (AEVC…RSPK). 3 positions are modified to phosphoserine: Ser578, Ser592, and Ser642. A Phosphothreonine modification is found at Thr644. The segment covering 654 to 673 (KPVEKPHEKPETRASKDHSG) has biased composition (basic and acidic residues). An Omega-N-methylarginine modification is found at Arg681. Phosphoserine is present on Ser717.

In terms of assembly, interacts (via N-terminal region) with PABPC1. Interacts with RACK1.

The protein resides in the cytoplasm. It localises to the stress granule. It is found in the cytosol. Its function is as follows. RNA binding protein that binds to the poly-A tract of mRNA molecules. Associates with the 40S ribosomal subunit and with polysomes. Plays a role in the regulation of mRNA translation. Plays a role in the regulation of cell morphology and cytoskeletal organization. The polypeptide is La-related protein 4 (Larp4) (Mus musculus (Mouse)).